We begin with the raw amino-acid sequence, 216 residues long: Small ribosomal subunit protein eS6 (216 aa).

The protein belongs to the eukaryotic ribosomal protein eS6 family.

The protein is Small ribosomal subunit protein eS6 of Staphylothermus marinus (strain ATCC 43588 / DSM 3639 / JCM 9404 / F1).